A 327-amino-acid polypeptide reads, in one-letter code: GTPase Obg (327 aa).

One can recognise an Obg domain in the interval 1-159; that stretch reads MKFVDSARIV…LKVDLELKLM (159 aa). The disordered stretch occupies residues 120 to 145; it reads GGDGGRGNPHFTTSTRQAPRYAEPGG. One can recognise an OBG-type G domain in the interval 160 to 323; that stretch reads ADVGLVGFPN…LRNALWNTIN (164 aa). GTP is bound by residues 166-173, 191-195, 213-216, 280-283, and 304-306; these read GFPNAGKS, FTTLV, DIPG, TKMD, and SSI. S173 and T193 together coordinate Mg(2+).

It belongs to the TRAFAC class OBG-HflX-like GTPase superfamily. OBG GTPase family. Monomer. The cofactor is Mg(2+).

The protein resides in the cytoplasm. In terms of biological role, an essential GTPase which binds GTP, GDP and possibly (p)ppGpp with moderate affinity, with high nucleotide exchange rates and a fairly low GTP hydrolysis rate. Plays a role in control of the cell cycle, stress response, ribosome biogenesis and in those bacteria that undergo differentiation, in morphogenesis control. This Prosthecochloris aestuarii (strain DSM 271 / SK 413) protein is GTPase Obg.